The sequence spans 440 residues: GTPase Der (440 aa).

EngA-type G domains follow at residues Pro4–Asp168 and Ile177–Ala352. GTP is bound by residues Gly10–Ser17, Asp57–Ile61, Asn120–Asp123, Gly183–Ser190, Asp230–Ile234, and Asn295–Asp298. One can recognise a KH-like domain in the interval Met353–Thr437.

Belongs to the TRAFAC class TrmE-Era-EngA-EngB-Septin-like GTPase superfamily. EngA (Der) GTPase family. As to quaternary structure, associates with the 50S ribosomal subunit.

Its function is as follows. GTPase that plays an essential role in the late steps of ribosome biogenesis. The polypeptide is GTPase Der (Alkaliphilus oremlandii (strain OhILAs) (Clostridium oremlandii (strain OhILAs))).